Here is a 525-residue protein sequence, read N- to C-terminus: Cytochrome P450 750A1 (525 aa).

Residues 13 to 33 (PLPLPAILIATFIFFFSCWIL) form a helical membrane-spanning segment. Cys-465 lines the heme pocket.

This sequence belongs to the cytochrome P450 family. Requires heme as cofactor.

The protein localises to the membrane. This chain is Cytochrome P450 750A1 (CYP750A1), found in Pinus taeda (Loblolly pine).